The following is an 86-amino-acid chain: MVVIRLSRAGAKKRPFYHMVVTDSRKRRDGNYIERIGYFNPVARGQEVKLHIDMDKMTHWQKVGAQLSDRVSALLKEHSKKSETAA.

It belongs to the bacterial ribosomal protein bS16 family.

This Legionella pneumophila (strain Paris) protein is Small ribosomal subunit protein bS16.